A 144-amino-acid polypeptide reads, in one-letter code: Large ribosomal subunit protein uL15 (144 aa).

Positions 1-52 (MRLNTISSAPGAKQAEKRVGRGIGSGWGKTCGRGHKGQKSRSGGFHKVGFEG) are disordered. Positions 21 to 31 (RGIGSGWGKTC) are enriched in gly residues.

Belongs to the universal ribosomal protein uL15 family. As to quaternary structure, part of the 50S ribosomal subunit.

Binds to the 23S rRNA. The sequence is that of Large ribosomal subunit protein uL15 from Nitrosococcus oceani (strain ATCC 19707 / BCRC 17464 / JCM 30415 / NCIMB 11848 / C-107).